We begin with the raw amino-acid sequence, 95 residues long: MTKSELIEKLATRQSQLSAKEVEAAIKEMLEQMADTLEAGDRIEIRGFGSFSLHYRAPRTGRNPKTGTSVELEGKYVPHFKPGKELRERVDAINT.

Belongs to the bacterial histone-like protein family. Heterodimer of an alpha and a beta chain.

Its function is as follows. This protein is one of the two subunits of integration host factor, a specific DNA-binding protein that functions in genetic recombination as well as in transcriptional and translational control. The chain is Integration host factor subunit beta from Shewanella halifaxensis (strain HAW-EB4).